Reading from the N-terminus, the 481-residue chain is Argininosuccinate synthase (481 aa).

ATP-binding positions include A17–S25 and A43. Position 99 (Y99) interacts with L-citrulline. G129 and T131 together coordinate ATP. T131, N135, and D136 together coordinate L-aspartate. N135 provides a ligand contact to L-citrulline. An ATP-binding site is contributed by D136. R139 and S192 together coordinate L-citrulline. D194 provides a ligand contact to ATP. L-citrulline is bound by residues T201, E203, and E280.

It belongs to the argininosuccinate synthase family. Type 2 subfamily. As to quaternary structure, homotetramer.

The protein resides in the cytoplasm. It catalyses the reaction L-citrulline + L-aspartate + ATP = 2-(N(omega)-L-arginino)succinate + AMP + diphosphate + H(+). It functions in the pathway amino-acid biosynthesis; L-arginine biosynthesis; L-arginine from L-ornithine and carbamoyl phosphate: step 2/3. In Streptomyces coelicolor (strain ATCC BAA-471 / A3(2) / M145), this protein is Argininosuccinate synthase (argG).